The sequence spans 423 residues: Adenylosuccinate synthetase (423 aa).

GTP contacts are provided by residues 12 to 18 (GDEGKGK) and 40 to 42 (GHT). The Proton acceptor role is filled by Asp13. Mg(2+)-binding residues include Asp13 and Gly40. Residues 13-16 (DEGK), 38-41 (NAGH), Thr128, Arg142, Gln223, Thr238, and Arg302 contribute to the IMP site. The Proton donor role is filled by His41. 298 to 304 (TTTGRPR) contributes to the substrate binding site. Residues Arg304, 330-332 (RLD), and 412-414 (CIG) each bind GTP.

This sequence belongs to the adenylosuccinate synthetase family. As to quaternary structure, homodimer. Requires Mg(2+) as cofactor.

Its subcellular location is the cytoplasm. The catalysed reaction is IMP + L-aspartate + GTP = N(6)-(1,2-dicarboxyethyl)-AMP + GDP + phosphate + 2 H(+). The protein operates within purine metabolism; AMP biosynthesis via de novo pathway; AMP from IMP: step 1/2. Functionally, plays an important role in the de novo pathway of purine nucleotide biosynthesis. Catalyzes the first committed step in the biosynthesis of AMP from IMP. This Dehalococcoides mccartyi (strain ATCC BAA-2100 / JCM 16839 / KCTC 5957 / BAV1) protein is Adenylosuccinate synthetase.